We begin with the raw amino-acid sequence, 737 residues long: Oligopeptide transporter 3 (737 aa).

Transmembrane regions (helical) follow at residues 45–65, 69–89, 117–137, 153–173, 215–235, 255–275, 289–309, 357–377, 418–438, 446–466, 478–498, 532–552, 604–624, 629–649, 650–670, and 681–701; these read AWFLGLTSCVLLIFLNTFFTY, PLTISAILMQIAVLPIGKFMA, VIITIFANCGVAYGGGDAYSI, FICGLFIVLTTQILGYGWAGI, FLVALGASFIYYALPGYLFPI, VGSGYHGLGVGAFTLDWAGIS, ILNVGVGFIMFIYIIVPVCYW, LYLSPLFALSIGSGFARFTAT, WWFYILLAGSVAMSLLMSFVW, WWGMLFAFALAFIVTLPIGVI, IIGQFIIGYILPGKPIANLIF, AQLVGTVVAGVVNLGVAWWML, VWLFLIGAVLPVPVWALSKIF, WIPLINIPVISYGFAGMPPAT, PTNIASWLVTGTIFNYFVFNY, and VLSAALDAGTAFMGVLLFFAL.

The protein belongs to the oligopeptide OPT transporter (TC 2.A.67.1) family. Strong expression in flowers, leaves and roots. Preferentially expressed in the vascular tissues of seedlings and mature plants as well as in pollen and developing embryos.

The protein localises to the membrane. Functionally, may be involved in the translocation of tetra- and pentapeptides across the cellular membrane in an energy-dependent manner. Also acts as a metal transporter that could be a component of the copper transport machinery. Essential for early embryo development. The polypeptide is Oligopeptide transporter 3 (OPT3) (Arabidopsis thaliana (Mouse-ear cress)).